We begin with the raw amino-acid sequence, 105 residues long: UPF0145 protein OEOE_0637 (105 aa).

This sequence belongs to the UPF0145 family.

This Oenococcus oeni (strain ATCC BAA-331 / PSU-1) protein is UPF0145 protein OEOE_0637.